A 179-amino-acid chain; its full sequence is Cytochrome c-type biogenesis protein CcmE (179 aa).

The Cytoplasmic portion of the chain corresponds to 1 to 8 (MNPRRKSR). A helical; Signal-anchor for type II membrane protein membrane pass occupies residues 9–29 (LTIILFVLLGVTIASSLVLYA). The Periplasmic segment spans residues 30–179 (LRQNIDLFYT…AVNSVEEGKK (150 aa)). The heme site is built by histidine 131 and tyrosine 135. Basic and acidic residues-rich tracts occupy residues 138–148 (PDLSEKMEQVH) and 161–179 (ESDR…EGKK). The tract at residues 138-179 (PDLSEKMEQVHKPMGISNQDMQGESDRDRLDKAVNSVEEGKK) is disordered.

The protein belongs to the CcmE/CycJ family.

It is found in the cell inner membrane. Functionally, heme chaperone required for the biogenesis of c-type cytochromes. Transiently binds heme delivered by CcmC and transfers the heme to apo-cytochromes in a process facilitated by CcmF and CcmH. The chain is Cytochrome c-type biogenesis protein CcmE from Mannheimia succiniciproducens (strain KCTC 0769BP / MBEL55E).